We begin with the raw amino-acid sequence, 364 residues long: Chorismate synthase (364 aa).

R48 contributes to the NADP(+) binding site. FMN contacts are provided by residues 131-133, 243-244, G288, 303-307, and R329; these read RSS, NA, and KPTSS.

Belongs to the chorismate synthase family. As to quaternary structure, homotetramer. FMNH2 is required as a cofactor.

It catalyses the reaction 5-O-(1-carboxyvinyl)-3-phosphoshikimate = chorismate + phosphate. Its pathway is metabolic intermediate biosynthesis; chorismate biosynthesis; chorismate from D-erythrose 4-phosphate and phosphoenolpyruvate: step 7/7. Functionally, catalyzes the anti-1,4-elimination of the C-3 phosphate and the C-6 proR hydrogen from 5-enolpyruvylshikimate-3-phosphate (EPSP) to yield chorismate, which is the branch point compound that serves as the starting substrate for the three terminal pathways of aromatic amino acid biosynthesis. This reaction introduces a second double bond into the aromatic ring system. This is Chorismate synthase from Brucella melitensis biotype 2 (strain ATCC 23457).